The sequence spans 418 residues: D-inositol 3-phosphate glycosyltransferase 1 (418 aa).

UDP-N-acetyl-alpha-D-glucosamine contacts are provided by residues 24–25 (QP) and Gly32. Residues 29-34 (DAGGLN), Lys87, His115, Ser139, and Gln159 each bind 1D-myo-inositol 3-phosphate. Residues Arg233 and Lys238 each contribute to the UDP-N-acetyl-alpha-D-glucosamine site. Mg(2+)-binding residues include Tyr308, Arg309, and Ala311. Positions 321 and 329 each coordinate UDP-N-acetyl-alpha-D-glucosamine. Thr335 contacts Mg(2+).

The protein belongs to the glycosyltransferase group 1 family. MshA subfamily. As to quaternary structure, homodimer.

It carries out the reaction 1D-myo-inositol 3-phosphate + UDP-N-acetyl-alpha-D-glucosamine = 1D-myo-inositol 2-acetamido-2-deoxy-alpha-D-glucopyranoside 3-phosphate + UDP + H(+). Catalyzes the transfer of a N-acetyl-glucosamine moiety to 1D-myo-inositol 3-phosphate to produce 1D-myo-inositol 2-acetamido-2-deoxy-glucopyranoside 3-phosphate in the mycothiol biosynthesis pathway. This Catenulispora acidiphila (strain DSM 44928 / JCM 14897 / NBRC 102108 / NRRL B-24433 / ID139908) protein is D-inositol 3-phosphate glycosyltransferase 1.